The sequence spans 890 residues: Translation initiation factor IF-2 (890 aa).

The interval 45 to 304 (LIDHLNQKNS…LQQGFQKPAQ (260 aa)) is disordered. Residues 67–81 (STLNIPGTGGKSKSV) show a composition bias toward polar residues. The segment covering 92–217 (VKRDPQEAER…RMAEENKWTD (126 aa)) has biased composition (basic and acidic residues). Positions 252–266 (GRGRNAKAARPKKGN) are enriched in basic residues. Over residues 267–280 (KHAESKADREEARA) the composition is skewed to basic and acidic residues. Residues 389 to 558 (PRAPVVTIMG…LLQAEVLELK (170 aa)) enclose the tr-type G domain. The G1 stretch occupies residues 398 to 405 (GHVDHGKT). 398-405 (GHVDHGKT) contacts GTP. Residues 423 to 427 (GITQH) are G2. A G3 region spans residues 444 to 447 (DTPG). GTP contacts are provided by residues 444–448 (DTPGH) and 498–501 (NKID). Residues 498 to 501 (NKID) form a G4 region. The G5 stretch occupies residues 534–536 (SAK). Lys808 carries the post-translational modification N6-acetyllysine.

The protein belongs to the TRAFAC class translation factor GTPase superfamily. Classic translation factor GTPase family. IF-2 subfamily.

It is found in the cytoplasm. Its function is as follows. One of the essential components for the initiation of protein synthesis. Protects formylmethionyl-tRNA from spontaneous hydrolysis and promotes its binding to the 30S ribosomal subunits. Also involved in the hydrolysis of GTP during the formation of the 70S ribosomal complex. The chain is Translation initiation factor IF-2 from Escherichia coli (strain 55989 / EAEC).